We begin with the raw amino-acid sequence, 248 residues long: Coproheme decarboxylase (248 aa).

Fe-coproporphyrin III is bound by residues arginine 130, 144–148, histidine 171, glutamine 184, and serine 222; that span reads YPMDK. Tyrosine 144 is an active-site residue.

It belongs to the ChdC family. Type 1 subfamily. In terms of assembly, homopentamer. It depends on Fe-coproporphyrin III as a cofactor.

It carries out the reaction Fe-coproporphyrin III + 2 H2O2 + 2 H(+) = heme b + 2 CO2 + 4 H2O. The catalysed reaction is Fe-coproporphyrin III + H2O2 + H(+) = harderoheme III + CO2 + 2 H2O. It catalyses the reaction harderoheme III + H2O2 + H(+) = heme b + CO2 + 2 H2O. It participates in porphyrin-containing compound metabolism; protoheme biosynthesis. Its function is as follows. Involved in coproporphyrin-dependent heme b biosynthesis. Catalyzes the decarboxylation of Fe-coproporphyrin III (coproheme) to heme b (protoheme IX), the last step of the pathway. The reaction occurs in a stepwise manner with a three-propionate intermediate. The chain is Coproheme decarboxylase from Geobacillus kaustophilus (strain HTA426).